We begin with the raw amino-acid sequence, 183 residues long: uncharacterized protein (183 aa).

Residues 153-175 (LLYVFIRLFAGCLKVFRLCILWL) traverse the membrane as a helical segment.

Its subcellular location is the membrane. This is an uncharacterized protein from Saccharomyces cerevisiae (strain ATCC 204508 / S288c) (Baker's yeast).